A 378-amino-acid polypeptide reads, in one-letter code: MCGVRVAIVAESFLPQVNGVSNSVVKVLEHLRRTGHEALVIAPDTPPGEDRAERLHDGVRVHRVPSRMFPKVTTLPLGVPTFRMLRALRGFDPDVVHLASPALLGYGGLHAARRLGVPTVAVYQTDVPGFASSYGIPMTARAAWAWFRHLHRLADRTLAPSTATMESLIAQGIPRVHRWARGVDVQRFAPSARNEVLRRRWSPDGKPIVGFVGRLAPEKHVDRLTGLAASGAVRLVIVGDGIDRARLQSAMPTAVFTGARYGKELAEAYASMDVFVHSGEHETFCQVVQEALASGLPVIAPDAGGPRDLITPHRTGLLLPVGEFEHRLPDAVAHLVHERQRYALAARRSVLGRSWPVVCDELLGHYEAVRGRRTTQAA.

It belongs to the glycosyltransferase group 1 family. Glycosyltransferase 4 subfamily.

It functions in the pathway phospholipid metabolism; phosphatidylinositol metabolism. Catalyzes the addition of a mannose residue from GDP-D-mannose to GlcAGroAc2 to generate 1,2-di-O-C16/C18:1-(alpha-D-mannopyranosyl)-(1-4)-(alpha-D-glucopyranosyluronic acid)-(1-3)-glycerol(ManGlcAGroAc2). This chain is GDP-mannose-dependent alpha-mannosyltransferase (mgtA), found in Mycobacterium tuberculosis (strain CDC 1551 / Oshkosh).